The sequence spans 258 residues: Trifolitoxin-processing protein TfxF (258 aa).

Its function is as follows. The actions of the proteins TfxB, TfxD and TfxF are implicated in the processing of the inactive trifolitoxin (TfxA) precursor into the active peptide. The chain is Trifolitoxin-processing protein TfxF (tfxF) from Rhizobium leguminosarum bv. trifolii.